The following is a 116-amino-acid chain: Ribosome-binding factor A (116 aa).

It belongs to the RbfA family. As to quaternary structure, monomer. Binds 30S ribosomal subunits, but not 50S ribosomal subunits or 70S ribosomes.

Its subcellular location is the cytoplasm. One of several proteins that assist in the late maturation steps of the functional core of the 30S ribosomal subunit. Associates with free 30S ribosomal subunits (but not with 30S subunits that are part of 70S ribosomes or polysomes). Required for efficient processing of 16S rRNA. May interact with the 5'-terminal helix region of 16S rRNA. In Ureaplasma parvum serovar 3 (strain ATCC 27815 / 27 / NCTC 11736), this protein is Ribosome-binding factor A.